The sequence spans 400 residues: Argininosuccinate synthase (400 aa).

10-18 is an ATP binding site; sequence AFSGGLDTT. Tyrosine 87 lines the L-citrulline pocket. Glycine 117 lines the ATP pocket. Threonine 119, asparagine 123, and aspartate 124 together coordinate L-aspartate. Residue asparagine 123 participates in L-citrulline binding. The L-citrulline site is built by arginine 127, serine 173, serine 182, glutamate 255, and tyrosine 267.

This sequence belongs to the argininosuccinate synthase family. Type 1 subfamily. In terms of assembly, homotetramer.

The protein resides in the cytoplasm. It catalyses the reaction L-citrulline + L-aspartate + ATP = 2-(N(omega)-L-arginino)succinate + AMP + diphosphate + H(+). It functions in the pathway amino-acid biosynthesis; L-arginine biosynthesis; L-arginine from L-ornithine and carbamoyl phosphate: step 2/3. This Natronomonas pharaonis (strain ATCC 35678 / DSM 2160 / CIP 103997 / JCM 8858 / NBRC 14720 / NCIMB 2260 / Gabara) (Halobacterium pharaonis) protein is Argininosuccinate synthase.